The sequence spans 407 residues: Putative mannan endo-1,4-beta-mannosidase 9 (407 aa).

Residues 1-31 form the signal peptide; sequence MGSKRRVILLPTLGVVVLAIAAAVLLHAGEA. Substrate is bound by residues W95 and N208. Catalysis depends on E209, which acts as the Proton donor. Y284 serves as a coordination point for substrate. The active-site Nucleophile is the E324. Residue W366 participates in substrate binding.

Belongs to the glycosyl hydrolase 5 (cellulase A) family. In terms of tissue distribution, expression not detected.

It is found in the secreted. The catalysed reaction is Random hydrolysis of (1-&gt;4)-beta-D-mannosidic linkages in mannans, galactomannans and glucomannans.. The sequence is that of Putative mannan endo-1,4-beta-mannosidase 9 (MAN9) from Oryza sativa subsp. japonica (Rice).